The sequence spans 84 residues: Alpha-mammal toxin Ts2 (84 aa).

The signal sequence occupies residues 1–20 (MKGFLLFISILMMIGTIVVG). The region spanning 21-83 (KEGYAMDHEG…VWDYATNKCG (63 aa)) is the LCN-type CS-alpha/beta domain. 4 disulfides stabilise this stretch: cysteine 31–cysteine 82, cysteine 35–cysteine 58, cysteine 43–cysteine 63, and cysteine 47–cysteine 65. The residue at position 82 (cysteine 82) is a Cysteine amide.

Belongs to the long (4 C-C) scorpion toxin superfamily. Sodium channel inhibitor family. Beta subfamily. Expressed by the venom gland.

The protein resides in the secreted. Alpha toxins bind voltage-independently at site-3 of sodium channels (Nav) and inhibit the inactivation of the activated channels, thereby blocking neuronal transmission. This toxin acts on Nav1.2/SCN2A, Nav1.3/SCN3A, Nav1.5/SCN5A, Nav1.6/SCN8A and Nav1.7/SCN9A voltage-gated sodium channels, with the highest affinity for Nav1.3/SCN3A, followed by Nav1.6/SCN8A and Nav1.7/SCN9A which are affected almost equally. Interestingly, shows a significant shift of the voltage dependence of activation for Nav1.3/SCN3A that is characteristic of beta-toxins. In addition, in presence of LPS, this toxin inhibits the release of NO, IL-6 and TNF-alpha in J774.1 cells. Further, in the absence of LPS, it stimulates the production of the anti-inflammatory cytokine IL-10. This toxin is active on mammals. The polypeptide is Alpha-mammal toxin Ts2 (Tityus serrulatus (Brazilian scorpion)).